Reading from the N-terminus, the 323-residue chain is 4-diphosphocytidyl-2-C-methyl-D-erythritol kinase (323 aa).

Lys25 is an active-site residue. Position 110 to 120 (110 to 120 (PVAGGMAGGSA)) interacts with ATP. Asp152 is an active-site residue.

The protein belongs to the GHMP kinase family. IspE subfamily.

It carries out the reaction 4-CDP-2-C-methyl-D-erythritol + ATP = 4-CDP-2-C-methyl-D-erythritol 2-phosphate + ADP + H(+). The protein operates within isoprenoid biosynthesis; isopentenyl diphosphate biosynthesis via DXP pathway; isopentenyl diphosphate from 1-deoxy-D-xylulose 5-phosphate: step 3/6. In terms of biological role, catalyzes the phosphorylation of the position 2 hydroxy group of 4-diphosphocytidyl-2C-methyl-D-erythritol. This Mycobacterium leprae (strain Br4923) protein is 4-diphosphocytidyl-2-C-methyl-D-erythritol kinase.